A 370-amino-acid chain; its full sequence is MESADLRDPDGMPVTLSDFEIDAAGRLSADLLAYLEGGAEAGQSVTENRAAFGRIGLLPKLLSPCAGGHTRTTILGKQAPHPIMVAPMAFQNLFHPQGESATAMAAAAQDATMVLSCQTSTPPEDIATIPGRRWFQLYMQADHEATMALVTRAVDCGADALVVTLDAPINGLRDREVAAGFTLPDDVRPVMLDVLPQPPRPHLRDGQSVVFDGMMVFAPTADDLARLIADSPVPVIVKGCLRPADATRLIDLGAQGIIVSNHGGRVLDTVPAPITQLAAVVDAVAGAVPVYVDGGIRRGSDVFKALALGAQAVLVGRPVMHGLIVDGPRGASQVLRRLRDELEVTMALCGCATVADITPDLLTGFSGTGS.

Residues 8-367 enclose the FMN hydroxy acid dehydrogenase domain; that stretch reads DPDGMPVTLS…TPDLLTGFSG (360 aa). Position 34 (Tyr-34) interacts with pyruvate. Residues 87–89, Ser-116, and Gln-136 each bind FMN; that span reads PMA. Residue Tyr-138 coordinates pyruvate. Thr-164 is an FMN binding site. Arg-173 lines the pyruvate pocket. 2 residues coordinate FMN: Lys-238 and Ser-260. Residues His-262 and Arg-265 each contribute to the pyruvate site. The active-site Proton acceptor is the His-262. FMN is bound by residues 293 to 297 and Arg-317; that span reads DGGIR.

The protein belongs to the FMN-dependent alpha-hydroxy acid dehydrogenase family. In terms of assembly, homotetramer. FMN serves as cofactor.

The enzyme catalyses (S)-lactate + O2 = pyruvate + H2O2. It catalyses the reaction a (2S)-2-hydroxycarboxylate + O2 = a 2-oxocarboxylate + H2O2. It carries out the reaction glycolate + O2 = glyoxylate + H2O2. The catalysed reaction is 2-hydroxyoctadecanoate + O2 = 2-oxooctadecanoate + H2O2. Its function is as follows. Catalyzes the oxidation of (S)-lactate (L-lactate) to pyruvate, with a reduction of O2 to H2O2. Is also able to use glycolate and to a lesser extent 2-hydroxyoctadecanoate as substrate. The chain is L-lactate oxidase from Roseobacter sp. (strain GAI101).